The primary structure comprises 1464 residues: Collagen alpha-1(I) chain (1464 aa).

The first 22 residues, 1-22 (MFSFVDLRLLLLLAATALLTHG), serve as a signal peptide directing secretion. Residues 23–161 (QEEGQVEGQD…PPGLGGNFAP (139 aa)) constitute a propeptide, N-terminal propeptide. The VWFC domain occupies 38–96 (ITCVQNGLRYHDRDVWKPEPCRICVCDNGKVLCDDVICDETKNCPGAEVPEGECCPVCP). Residues 98–1214 (GSESPTDQET…PQEKAHDGGR (1117 aa)) form a disordered region. Residues 138 to 153 (PGLPGPPGPPGPPGPP) are compositionally biased toward pro residues. Gln162 is subject to Pyrrolidone carboxylic acid. A nonhelical region (N-terminal) region spans residues 162 to 178 (QLSYGYDEKSTGGISVP). Lys170 bears the Allysine mark. Ser171 carries the phosphoserine modification. Residues 179-1192 (GPMGPSGPRG…PGPPGPPGPP (1014 aa)) form a triple-helical region region. 11 positions are modified to 4-hydroxyproline: Pro190, Pro193, Pro196, Pro205, Pro208, Pro211, Pro226, Pro241, Pro247, Pro256, and Pro262. Residues 198–217 (PQGFQGPPGEPGEPGASGPM) show a composition bias toward low complexity. Residues 229-243 (NGDDGEAGKPGRPGE) show a composition bias toward basic and acidic residues. 5-hydroxylysine; alternate is present on Lys265. An O-linked (Gal...) hydroxylysine; alternate glycan is attached at Lys265. A Phosphoserine modification is found at Ser271. Positions 279–295 (DAGPAGPKGEPGSPGEN) are enriched in low complexity. 5 positions are modified to 4-hydroxyproline: Pro289, Pro292, Pro298, Pro307, and Pro313. Positions 318 to 331 (PAGARGNDGATGAA) are enriched in low complexity. Pro residues predominate over residues 333–345 (PPGPTGPAGPPGF). 11 positions are modified to 4-hydroxyproline: Pro334, Pro343, Pro346, Pro373, Pro376, Pro388, Pro394, Pro403, Pro409, Pro412, and Pro427. Residues 379–418 (AGAAGPAGNPGADGQPGAKGANGAPGIAGAPGFPGARGPS) are compositionally biased toward low complexity. Residue Lys430 is modified to 5-hydroxylysine. Pro436, Pro439, Pro451, Pro460, Pro475, Pro481, Pro490, and Pro496 each carry 4-hydroxyproline. Low complexity predominate over residues 448-457 (KGEPGPVGVQ). A compositionally biased stretch (gly residues) spans 485–494 (GERGGPGSRG). Lys505 is modified (5-hydroxylysine). 4-hydroxyproline is present on residues Pro514, Pro523, Pro529, Pro535, Pro544, Pro547, Pro556, Pro565, Pro571, Pro583, Pro592, Pro601, Pro604, Pro622, Pro640, Pro646, Pro652, Pro658, Pro664, Pro670, Pro682, Pro691, Pro703, Pro715, Pro718, Pro724, Pro730, and Pro739. A compositionally biased stretch (low complexity) spans 538–564 (KGLTGSPGSPGPDGKTGPPGPAGQDGR). Over residues 573-592 (ARGQAGVMGFPGPKGAAGEP) the composition is skewed to low complexity. Over residues 634–661 (QGPAGSPGFQGLPGPAGPPGEAGKPGEQ) the composition is skewed to low complexity. Residues 696-724 (PRGANGAPGNDGAKGDAGAPGAPGSQGAP) show a composition bias toward low complexity. The Cell attachment site signature appears at 745 to 747 (RGD). The residue at position 751 (Lys751) is a 5-hydroxylysine. Residues Pro757, Pro772, and Pro778 each carry the 4-hydroxyproline modification. The segment covering 784–798 (SGPSGPAGPTGARGA) has biased composition (low complexity). Ser787 carries the phosphoserine modification. Pro799, Pro805, Pro808, Pro817, Pro823, Pro841, Pro850, and Pro859 each carry 4-hydroxyproline. Positions 811–838 (AGFAGPPGADGQPGAKGEPGDAGAKGDA) are enriched in low complexity. The span at 840–852 (PPGPAGPAGPPGP) shows a compositional bias: pro residues. A compositionally biased stretch (low complexity) spans 853–883 (IGNVGAPGAKGARGSAGPPGATGFPGAAGRV). At Lys862 the chain carries 5-hydroxylysine. 4-hydroxyproline occurs at positions 871 and 877. Pro885 is subject to 3-hydroxyproline. Residues Pro886, Pro895, Pro898, Pro919, Pro928, Pro937, Pro946, Pro964, Pro973, Pro976, Pro982, Pro997, Pro1003, Pro1009, Pro1018, and Pro1024 each carry the 4-hydroxyproline modification. Low complexity predominate over residues 912–921 (ETGPAGRPGE). The span at 931–955 (AGEKGSPGADGPAGAPGTPGPQGIA) shows a compositional bias: low complexity. A compositionally biased stretch (pro residues) spans 996-1006 (PPGPMGPPGLA). Lys1033 is subject to 5-hydroxylysine. Over residues 1042–1057 (AGPPGAPGAPGAPGPV) the composition is skewed to pro residues. A 4-hydroxyproline mark is found at Pro1045, Pro1048, and Pro1051. Over residues 1078 to 1092 (VGPVGARGPAGPQGP) the composition is skewed to low complexity. The Cell attachment site signature appears at 1093–1095 (RGD). Residues 1093–1107 (RGDKGETGEQGDRGI) show a composition bias toward basic and acidic residues. A 5-hydroxylysine modification is found at Lys1096. Residue Lys1108 is modified to 5-hydroxylysine; alternate. Lys1108 carries O-linked (Gal...) hydroxylysine; alternate glycosylation. Residues Pro1120, Pro1123, Pro1126, Pro1144, and Pro1159 each carry the 4-hydroxyproline modification. Low complexity predominate over residues 1126-1159 (PGEQGPSGASGPAGPRGPPGSAGAPGKDGLNGLP). Pro1164 is subject to 3-hydroxyproline. Pro1165 bears the 4-hydroxyproline mark. The span at 1177–1192 (VGPPGPPGPPGPPGPP) shows a compositional bias: pro residues. The residue at position 1179 (Pro1179) is a 3-hydroxyproline. Residue Pro1180 is modified to 4-hydroxyproline. Pro1182 is modified (3-hydroxyproline). Pro1183 is modified (4-hydroxyproline). Pro1185 carries the 3-hydroxyproline modification. 3 positions are modified to 4-hydroxyproline: Pro1186, Pro1189, and Pro1192. Residues 1193-1218 (SAGFDFSFLPQPPQEKAHDGGRYYRA) are nonhelical region (C-terminal). Lys1208 carries the post-translational modification Allysine. A propeptide spans 1219–1464 (DDANVVRDRD…GFDVGPVCFL (246 aa)) (C-terminal propeptide). The 236-residue stretch at 1229 to 1464 (LEVDTTLKSL…GFDVGPVCFL (236 aa)) folds into the Fibrillar collagen NC1 domain. 3 disulfides stabilise this stretch: Cys1259-Cys1291, Cys1299-Cys1462, and Cys1370-Cys1415. Ca(2+) contacts are provided by Asp1277, Asn1279, Gln1280, Cys1282, and Asp1285. The N-linked (GlcNAc...) asparagine glycan is linked to Asn1365.

It belongs to the fibrillar collagen family. In terms of assembly, trimers of one alpha 2(I) and two alpha 1(I) chains. Interacts with MRC2. Interacts with TRAM2. Interacts with MFAP4 in a Ca (2+)-dependent manner. Post-translationally, contains mostly 4-hydroxyproline. Proline residues at the third position of the tripeptide repeating unit (G-X-Y) are hydroxylated in some or all of the chains. In terms of processing, contains 3-hydroxyproline at a few sites. This modification occurs on the first proline residue in the sequence motif Gly-Pro-Hyp, where Hyp is 4-hydroxyproline. Lysine residues at the third position of the tripeptide repeating unit (G-X-Y) are 5-hydroxylated in some or all of the chains. Post-translationally, O-glycosylated on hydroxylated lysine residues. The O-linked glycan consists of a Glc-Gal disaccharide. As to expression, forms the fibrils of tendon, ligaments and bones. In bones the fibrils are mineralized with calcium hydroxyapatite.

The protein resides in the secreted. Its subcellular location is the extracellular space. It localises to the extracellular matrix. In terms of biological role, type I collagen is a member of group I collagen (fibrillar forming collagen). In Homo sapiens (Human), this protein is Collagen alpha-1(I) chain (COL1A1).